A 1427-amino-acid polypeptide reads, in one-letter code: A disintegrin and metalloproteinase with thrombospondin motifs 13 (1427 aa).

A signal peptide spans 1–29; that stretch reads MHQRHPRARCPPLCVAGILACGFLLGCWG. The propeptide occupies 30–74; it reads PSHFQQSCLQALEPQAVSSYLSPGAPLKGRPPSPGFQRQRQRQRR. A disordered region spans residues 51–70; sequence SPGAPLKGRPPSPGFQRQRQ. The Peptidase M12B domain occupies 80-286; the sequence is LHLELLVAVG…GRARCVWDPP (207 aa). Glu83 serves as a coordination point for Ca(2+). 2 N-linked (GlcNAc...) asparagine glycosylation sites follow: Asn142 and Asn146. Disulfide bonds link Cys155–Cys208, Cys202–Cys281, and Cys242–Cys265. The Ca(2+) site is built by Asp173, Asp182, Glu184, Asp187, and Glu212. A Zn(2+)-binding site is contributed by His224. Glu225 is a catalytic residue. Residues His228 and His234 each contribute to the Zn(2+) site. The Ca(2+) site is built by Cys281 and Asp284. Positions 287 to 383 constitute a Disintegrin domain; the sequence is RPQPGSAGHP…LVELTPIAAV (97 aa). 4 disulfide bridges follow: Cys311/Cys337, Cys322/Cys347, Cys332/Cys366, and Cys360/Cys371. In terms of domain architecture, TSP type-1 1 spans 384-439; that stretch reads HGRWSSWGPRSPCSRSCGGGVVTRRRQCNNPRPAFGGRACVGADLQAEMCNTQACE. C-linked (Man) tryptophan glycosylation occurs at Trp387. 8 disulfide bridges follow: Cys396/Cys433, Cys400/Cys438, Cys411/Cys423, Cys450/Cys487, Cys483/Cys522, Cys508/Cys527, Cys532/Cys548, and Cys545/Cys555. Ser399 carries O-linked (Fuc...) serine glycosylation. The interval 440–556 is cysteine-rich; sequence KTQLEFMSQQ…VCGGDNSTCS (117 aa). The Cell attachment site motif lies at 498–500; it reads RGD. Asn552, Asn579, and Asn614 each carry an N-linked (GlcNAc...) asparagine glycan. The tract at residues 556–685 is spacer; the sequence is SPRKGSFTAG…TYFQPKPRQA (130 aa). A glycan (N-linked (GlcNAc...) (complex) asparagine) is linked at Asn667. TSP type-1 domains are found at residues 682–730, 742–805, 808–859, 896–950, 951–1011, 1012–1068, and 1072–1131; these read PRQA…SQQP, CPPY…QPCP, WEVS…PEPC, VWTP…QAVP, CPAR…SLEP, CPPR…VPCL, and CTYR…GPCV. O-linked (Fuc...) serine glycosylation occurs at Ser698. A glycan (N-linked (GlcNAc...) (complex) asparagine) is linked at Asn707. Ser757 carries an O-linked (Fuc...) serine glycan. Asn828 is a glycosylation site (N-linked (GlcNAc...) asparagine). 4 O-linked (Fuc...) serine glycosylation sites follow: Ser907, Ser965, Ser1027, and Ser1087. CUB domains are found at residues 1192-1298 and 1299-1427; these read CGRQ…FYRE and CDMQ…KEGT. N-linked (GlcNAc...) asparagine glycans are attached at residues Asn1235 and Asn1354.

It depends on Zn(2+) as a cofactor. The cofactor is Ca(2+). Post-translationally, glycosylated. O-fucosylated by POFUT2 on a serine or a threonine residue found within the consensus sequence C1-X(2)-(S/T)-C2-G of the TSP type-1 repeat domains where C1 and C2 are the first and second cysteine residue of the repeat, respectively. Fucosylated repeats can then be further glycosylated by the addition of a beta-1,3-glucose residue by the glucosyltransferase, B3GALTL. Fucosylation mediates the efficient secretion of ADAMTS13. May also be C-glycosylated on tryptophan residues within the consensus sequence W-X-X-W of the TPRs, and also N-glycosylated. These other glycosylations can also facilitate secretion. In terms of processing, the precursor is processed by a furin endopeptidase which cleaves off the pro-domain. As to expression, plasma. Expressed primarily in liver.

Its subcellular location is the secreted. The enzyme catalyses The enzyme cleaves the von Willebrand factor at bond 842-Tyr-|-Met-843 within the A2 domain.. Zinc and calcium ions cooperatively modulate enzyme activity. The cleavage of the pro-domain is not required for protease activity. Dependence on calcium for proteolytic activity is mediated by the high affinity site. Functionally, cleaves the vWF multimers in plasma into smaller forms thereby controlling vWF-mediated platelet thrombus formation. In Homo sapiens (Human), this protein is A disintegrin and metalloproteinase with thrombospondin motifs 13 (ADAMTS13).